A 345-amino-acid polypeptide reads, in one-letter code: MATYHHWTVGQALALFDKPLLELLFEAQQVHRQHFDPRQVQVSTLLSIKTGACPEDCKYCPQSSRYKTGLESERLMQVEQVLESAKKAKAAGSTRFCMGAAWKNPHERDMPYLAKMVEGVKALGMETCMTLGSLSKQQAHRLADAGLDYYNHNLDTSPEFYGSIITTRSYQERLDTLNEVRDAGIKVCSGGIVGLGETVRDRAGLLVQLANLPKPPESVPINMLVKVKGTPLENNAEVDAFEFIRTIAVARIMMPSSYVRLSAGREQMNEQTQAMCFMAGANSIFYGCKLLTTPNPDEDKDLQLFRKLGLNPQQTATSHGDREQQQALTEQLLHGDTAQFYNAAV.

Positions R38–S256 constitute a Radical SAM core domain. [4Fe-4S] cluster-binding residues include C53, C57, and C60. 4 residues coordinate [2Fe-2S] cluster: C97, C128, C188, and R260.

Belongs to the radical SAM superfamily. Biotin synthase family. As to quaternary structure, homodimer. [4Fe-4S] cluster serves as cofactor. It depends on [2Fe-2S] cluster as a cofactor.

It catalyses the reaction (4R,5S)-dethiobiotin + (sulfur carrier)-SH + 2 reduced [2Fe-2S]-[ferredoxin] + 2 S-adenosyl-L-methionine = (sulfur carrier)-H + biotin + 2 5'-deoxyadenosine + 2 L-methionine + 2 oxidized [2Fe-2S]-[ferredoxin]. It participates in cofactor biosynthesis; biotin biosynthesis; biotin from 7,8-diaminononanoate: step 2/2. Its function is as follows. Catalyzes the conversion of dethiobiotin (DTB) to biotin by the insertion of a sulfur atom into dethiobiotin via a radical-based mechanism. This chain is Biotin synthase, found in Yersinia pestis bv. Antiqua (strain Antiqua).